The chain runs to 86 residues: Beta-toxin CsEI (86 aa).

An N-terminal signal peptide occupies residues Met-1–Ala-19. Residues Lys-20–Gly-84 form the LCN-type CS-alpha/beta domain. Disulfide bonds link Cys-30–Cys-83, Cys-34–Cys-59, Cys-43–Cys-64, and Cys-47–Cys-66. Residue Cys-83 is modified to Cysteine amide.

The protein belongs to the long (4 C-C) scorpion toxin superfamily. Sodium channel inhibitor family. Beta subfamily. Expressed by the venom gland.

It is found in the secreted. Functionally, beta toxins bind voltage-independently at site-4 of sodium channels (Nav) and shift the voltage of activation toward more negative potentials thereby affecting sodium channel activation and promoting spontaneous and repetitive firing. Affects channels from chicken and frog. The sequence is that of Beta-toxin CsEI from Centruroides sculpturatus (Arizona bark scorpion).